Here is a 324-residue protein sequence, read N- to C-terminus: ATP phosphoribosyltransferase regulatory subunit (324 aa).

The protein belongs to the class-II aminoacyl-tRNA synthetase family. HisZ subfamily. In terms of assembly, heteromultimer composed of HisG and HisZ subunits.

The protein localises to the cytoplasm. It functions in the pathway amino-acid biosynthesis; L-histidine biosynthesis; L-histidine from 5-phospho-alpha-D-ribose 1-diphosphate: step 1/9. Its function is as follows. Required for the first step of histidine biosynthesis. May allow the feedback regulation of ATP phosphoribosyltransferase activity by histidine. The sequence is that of ATP phosphoribosyltransferase regulatory subunit from Carboxydothermus hydrogenoformans (strain ATCC BAA-161 / DSM 6008 / Z-2901).